A 357-amino-acid chain; its full sequence is 4-hydroxy-3-methylbut-2-en-1-yl diphosphate synthase (flavodoxin) (357 aa).

Positions 264, 267, 299, and 306 each coordinate [4Fe-4S] cluster.

The protein belongs to the IspG family. Requires [4Fe-4S] cluster as cofactor.

It catalyses the reaction (2E)-4-hydroxy-3-methylbut-2-enyl diphosphate + oxidized [flavodoxin] + H2O + 2 H(+) = 2-C-methyl-D-erythritol 2,4-cyclic diphosphate + reduced [flavodoxin]. The protein operates within isoprenoid biosynthesis; isopentenyl diphosphate biosynthesis via DXP pathway; isopentenyl diphosphate from 1-deoxy-D-xylulose 5-phosphate: step 5/6. Functionally, converts 2C-methyl-D-erythritol 2,4-cyclodiphosphate (ME-2,4cPP) into 1-hydroxy-2-methyl-2-(E)-butenyl 4-diphosphate. The protein is 4-hydroxy-3-methylbut-2-en-1-yl diphosphate synthase (flavodoxin) of Campylobacter jejuni subsp. jejuni serotype O:6 (strain 81116 / NCTC 11828).